Consider the following 468-residue polypeptide: Cysteine--tRNA ligase (468 aa).

Cys-33 is a Zn(2+) binding site. Positions 35–45 match the 'HIGH' region motif; sequence ATVQGLPHIGH. Cys-211, His-236, and Glu-240 together coordinate Zn(2+). The 'KMSKS' region signature appears at 267–271; that stretch reads KMSKS. Lys-270 contributes to the ATP binding site.

It belongs to the class-I aminoacyl-tRNA synthetase family. As to quaternary structure, monomer. The cofactor is Zn(2+).

The protein resides in the cytoplasm. The catalysed reaction is tRNA(Cys) + L-cysteine + ATP = L-cysteinyl-tRNA(Cys) + AMP + diphosphate. This chain is Cysteine--tRNA ligase, found in Mycobacterium avium (strain 104).